A 488-amino-acid polypeptide reads, in one-letter code: Glutamyl-tRNA(Gln) amidotransferase subunit A (488 aa).

Catalysis depends on charge relay system residues Lys-77 and Ser-152. The active-site Acyl-ester intermediate is the Ser-176.

This sequence belongs to the amidase family. GatA subfamily. In terms of assembly, heterotrimer of A, B and C subunits.

The catalysed reaction is L-glutamyl-tRNA(Gln) + L-glutamine + ATP + H2O = L-glutaminyl-tRNA(Gln) + L-glutamate + ADP + phosphate + H(+). Allows the formation of correctly charged Gln-tRNA(Gln) through the transamidation of misacylated Glu-tRNA(Gln) in organisms which lack glutaminyl-tRNA synthetase. The reaction takes place in the presence of glutamine and ATP through an activated gamma-phospho-Glu-tRNA(Gln). The polypeptide is Glutamyl-tRNA(Gln) amidotransferase subunit A (Streptococcus pneumoniae serotype 19F (strain G54)).